We begin with the raw amino-acid sequence, 157 residues long: Increased recombination centers protein 23 (157 aa).

The Cytoplasmic portion of the chain corresponds to 1–6 (MIEALE). A helical transmembrane segment spans residues 7 to 29 (IVLLLVIQSLQYICRTCIAFLLI). Over 30-33 (PFLG) the chain is Lumenal. Residues 34–56 (LYAFDLFLYVYRMILYLSQMFNY) traverse the membrane as a helical segment. The Cytoplasmic portion of the chain corresponds to 57-157 (KRKLGRSKTN…EEGYYIAGSI (101 aa)).

The protein resides in the endoplasmic reticulum membrane. Is probably involved in a pathway contributing to genomic integrity. This is Increased recombination centers protein 23 (IRC23) from Saccharomyces cerevisiae (strain ATCC 204508 / S288c) (Baker's yeast).